The sequence spans 514 residues: MQQLNPSEISEIIKKRIEKLDISSEAKTEGTIVSVSDGIVLIHGLADVMYGEMIEFEGGVYGLALNLERDSVGAVVLGDYKDLAEGQKVRVTGRILEVPVGEQLLGRVVDGLGNPIDGKGALETTLTEPVEKVAPGVIARKSVGQPMQTGYKSVDTMVPIGRGQRELVIGDRQTGKTALAIDAIINQKGTGIKCIYVAIGQKQSSIANVVRKLEEHGAMDHTIVVAAGAADPASMQFLAPYSGCTMGEYFRDRGEDALIIYDDLTKQAWAYRQISLLLRRPPGREAYPGDVFYLHSRLLERASRVNEEYVEKYTNGEVKGKTGSLTALPIIETQAGDVSAFVPTNVISITDGQIFLETSLFNAGIRPAMNAGISVSRVGGAAQTKIMKKLGGGIRLALAQYRELAAFAQFASDLDEATRKQLEHGQRVTELMKQKQFAPMTVAEMGLVLFAANEGFLDDVDAKKVVPFEAALLSYAKSEFGDLLAKINEAGDYNDEIAAGLKSCIEKFKSTQTW.

170–177 contributes to the ATP binding site; that stretch reads GDRQTGKT.

This sequence belongs to the ATPase alpha/beta chains family. In terms of assembly, F-type ATPases have 2 components, CF(1) - the catalytic core - and CF(0) - the membrane proton channel. CF(1) has five subunits: alpha(3), beta(3), gamma(1), delta(1), epsilon(1). CF(0) has three main subunits: a(1), b(2) and c(9-12). The alpha and beta chains form an alternating ring which encloses part of the gamma chain. CF(1) is attached to CF(0) by a central stalk formed by the gamma and epsilon chains, while a peripheral stalk is formed by the delta and b chains.

It is found in the cell inner membrane. The catalysed reaction is ATP + H2O + 4 H(+)(in) = ADP + phosphate + 5 H(+)(out). Produces ATP from ADP in the presence of a proton gradient across the membrane. The alpha chain is a regulatory subunit. In Hahella chejuensis (strain KCTC 2396), this protein is ATP synthase subunit alpha 2.